Here is a 597-residue protein sequence, read N- to C-terminus: Proteasome-associated ATPase (597 aa).

Positions 1 to 12 (MQHDRPGSRPEE) are enriched in basic and acidic residues. Residues 1-22 (MQHDRPGSRPEEGGEQQIGGDA) form a disordered region. The stretch at 21 to 97 (DAELNSQIRL…REEVDRLAQP (77 aa)) forms a coiled coil. 284-289 (GCGKTL) contributes to the ATP binding site. The docks into pockets in the proteasome alpha-ring stretch occupies residues 596 to 597 (YL).

Belongs to the AAA ATPase family. As to quaternary structure, homohexamer. Assembles into a hexameric ring structure that caps the 20S proteasome core. Strongly interacts with the prokaryotic ubiquitin-like protein Pup through a hydrophobic interface; the interacting region of ARC lies in its N-terminal coiled-coil domain. There is one Pup binding site per ARC hexamer ring. Upon ATP-binding, the C-terminus of ARC interacts with the alpha-rings of the proteasome core, possibly by binding to the intersubunit pockets.

It participates in protein degradation; proteasomal Pup-dependent pathway. In terms of biological role, ATPase which is responsible for recognizing, binding, unfolding and translocation of pupylated proteins into the bacterial 20S proteasome core particle. May be essential for opening the gate of the 20S proteasome via an interaction with its C-terminus, thereby allowing substrate entry and access to the site of proteolysis. Thus, the C-termini of the proteasomal ATPase may function like a 'key in a lock' to induce gate opening and therefore regulate proteolysis. This chain is Proteasome-associated ATPase, found in Saccharopolyspora erythraea (strain ATCC 11635 / DSM 40517 / JCM 4748 / NBRC 13426 / NCIMB 8594 / NRRL 2338).